The following is a 400-amino-acid chain: Elongation factor Tu 2 (400 aa).

Positions 10–209 constitute a tr-type G domain; sequence KPHVNIGTIG…KVDEYIPTPQ (200 aa). The tract at residues 19–26 is G1; the sequence is GHVDHGKT. Residue 19–26 participates in GTP binding; it reads GHVDHGKT. Thr-26 serves as a coordination point for Mg(2+). The interval 60-64 is G2; sequence GITIN. The segment at 81–84 is G3; that stretch reads DCPG. Residues 81–85 and 136–139 contribute to the GTP site; these read DCPGH and NKAD. The segment at 136-139 is G4; sequence NKAD. The tract at residues 174 to 176 is G5; that stretch reads SAL.

This sequence belongs to the TRAFAC class translation factor GTPase superfamily. Classic translation factor GTPase family. EF-Tu/EF-1A subfamily. As to quaternary structure, monomer.

It is found in the cytoplasm. The enzyme catalyses GTP + H2O = GDP + phosphate + H(+). Its function is as follows. GTP hydrolase that promotes the GTP-dependent binding of aminoacyl-tRNA to the A-site of ribosomes during protein biosynthesis. The chain is Elongation factor Tu 2 from Carboxydothermus hydrogenoformans (strain ATCC BAA-161 / DSM 6008 / Z-2901).